A 176-amino-acid polypeptide reads, in one-letter code: ATP-dependent protease subunit HslV (176 aa).

Thr2 is an active-site residue. Na(+) contacts are provided by Gly157, Cys160, and Thr163.

This sequence belongs to the peptidase T1B family. HslV subfamily. A double ring-shaped homohexamer of HslV is capped on each side by a ring-shaped HslU homohexamer. The assembly of the HslU/HslV complex is dependent on binding of ATP.

The protein localises to the cytoplasm. The enzyme catalyses ATP-dependent cleavage of peptide bonds with broad specificity.. Its activity is regulated as follows. Allosterically activated by HslU binding. In terms of biological role, protease subunit of a proteasome-like degradation complex believed to be a general protein degrading machinery. The polypeptide is ATP-dependent protease subunit HslV (Enterobacter sp. (strain 638)).